The primary structure comprises 133 residues: MTTTETQNPTARATAKHVRVTPMKARRVVDLVRGKRVEDALAILKFAPQAASEPVAKVVASAAANAENNLGLDPATLVISTAYVDEGATLKRFQPRAQGRAFRIRKRTSHITIEVESVPTAGGTRGRRKGGAK.

Belongs to the universal ribosomal protein uL22 family. As to quaternary structure, part of the 50S ribosomal subunit.

Functionally, this protein binds specifically to 23S rRNA; its binding is stimulated by other ribosomal proteins, e.g. L4, L17, and L20. It is important during the early stages of 50S assembly. It makes multiple contacts with different domains of the 23S rRNA in the assembled 50S subunit and ribosome. In terms of biological role, the globular domain of the protein is located near the polypeptide exit tunnel on the outside of the subunit, while an extended beta-hairpin is found that lines the wall of the exit tunnel in the center of the 70S ribosome. This chain is Large ribosomal subunit protein uL22, found in Nocardia farcinica (strain IFM 10152).